Here is a 148-residue protein sequence, read N- to C-terminus: Snaclec B2 (148 aa).

An N-terminal signal peptide occupies residues 1-24 (MGRLISVSFGLLVVFLSLSGTGAA). 3 disulfides stabilise this stretch: cysteine 27–cysteine 38, cysteine 55–cysteine 144, and cysteine 121–cysteine 136. Positions 34–145 (YDQHCYKVFD…CRLLGHFVCK (112 aa)) constitute a C-type lectin domain.

It belongs to the snaclec family. As to quaternary structure, heterodimer; disulfide-linked. Expressed by the venom gland.

It localises to the secreted. Interferes with one step of hemostasis (modulation of platelet aggregation, or coagulation cascade, for example). This Macrovipera lebetinus (Levantine viper) protein is Snaclec B2.